A 660-amino-acid chain; its full sequence is UvrABC system protein B (660 aa).

The Helicase ATP-binding domain occupies 26-414; sequence KKVLAGQRHQ…PEMTEQIIRP (389 aa). 39 to 46 provides a ligand contact to ATP; sequence GATGTGKT. The short motif at 92–115 is the Beta-hairpin element; that stretch reads YYDYYQPEAYVPSTDTFIEKDASI. Positions 430-596 constitute a Helicase C-terminal domain; sequence QIDNLIEEIR…TIRKEVRDVI (167 aa). In terms of domain architecture, UVR spans 624–659; sequence EKVIEQMENEMKQAAKDLDFEKAAELRDVILELKAE.

This sequence belongs to the UvrB family. As to quaternary structure, forms a heterotetramer with UvrA during the search for lesions. Interacts with UvrC in an incision complex.

It localises to the cytoplasm. Functionally, the UvrABC repair system catalyzes the recognition and processing of DNA lesions. A damage recognition complex composed of 2 UvrA and 2 UvrB subunits scans DNA for abnormalities. Upon binding of the UvrA(2)B(2) complex to a putative damaged site, the DNA wraps around one UvrB monomer. DNA wrap is dependent on ATP binding by UvrB and probably causes local melting of the DNA helix, facilitating insertion of UvrB beta-hairpin between the DNA strands. Then UvrB probes one DNA strand for the presence of a lesion. If a lesion is found the UvrA subunits dissociate and the UvrB-DNA preincision complex is formed. This complex is subsequently bound by UvrC and the second UvrB is released. If no lesion is found, the DNA wraps around the other UvrB subunit that will check the other stand for damage. This Oceanobacillus iheyensis (strain DSM 14371 / CIP 107618 / JCM 11309 / KCTC 3954 / HTE831) protein is UvrABC system protein B.